The sequence spans 171 residues: Ly6/PLAUR domain-containing protein 6 (171 aa).

Residues 1-25 (MEPSPALAWLLLLSLVADCLKAAQS) form the signal peptide. The 95-residue stretch at 47–141 (FKCFTCEKAA…PRNETDATFA (95 aa)) folds into the UPAR/Ly6 domain. Disulfide bonds link cysteine 49–cysteine 77, cysteine 52–cysteine 61, cysteine 70–cysteine 96, cysteine 102–cysteine 121, cysteine 107–cysteine 118, and cysteine 122–cysteine 127. The short motif at 88–90 (NSI) is the NxI motif element. 2 N-linked (GlcNAc...) asparagine glycosylation sites follow: asparagine 134 and asparagine 147. The GPI-anchor amidated asparagine moiety is linked to residue asparagine 147. Positions 148–171 (QTNGHPHCVSVIVSCLWVWLGLTL) are cleaved as a propeptide — removed in mature form.

In terms of assembly, interacts with nicotinic acetylcholine receptors (nAChRs) including CHRNA3, CHRNA4, CHRNA5, CHRNA6, CHRNA7, CHRNB2 and CHRNB4. Interacts (via NxI motif) with LRP6. Detected in the frontal cortex and hippocampus (at protein level). Highly expressed in the brain and spinal cord, as well as dorsal root and trigeminal ganglia.

It is found in the secreted. The protein localises to the cytoplasm. It localises to the cell membrane. The protein resides in the synapse. Its subcellular location is the synaptosome. It is found in the membrane raft. The protein localises to the cell projection. It localises to the dendrite. The protein resides in the perikaryon. Acts as a modulator of nicotinic acetylcholine receptors (nAChRs) function in the brain. Inhibits nicotine-induced Ca(2+) influx through nAChRs. In vitro, specifically inhibits alpha-3:beta-4 and alpha-7 nAChR currents in an allosteric manner. Acts as a positive regulator of Wnt/beta-catenin signaling. The sequence is that of Ly6/PLAUR domain-containing protein 6 (Lypd6) from Mus musculus (Mouse).